Here is a 308-residue protein sequence, read N- to C-terminus: Putative S-adenosyl-L-methionine-dependent methyltransferase MAB_4584c (308 aa).

S-adenosyl-L-methionine is bound by residues D131 and 160–161; that span reads DL.

It belongs to the UPF0677 family.

Its function is as follows. Exhibits S-adenosyl-L-methionine-dependent methyltransferase activity. This is Putative S-adenosyl-L-methionine-dependent methyltransferase MAB_4584c from Mycobacteroides abscessus (strain ATCC 19977 / DSM 44196 / CCUG 20993 / CIP 104536 / JCM 13569 / NCTC 13031 / TMC 1543 / L948) (Mycobacterium abscessus).